Consider the following 389-residue polypeptide: Carbamoyl phosphate synthase small chain (389 aa).

The interval 1–197 (MMSSPAKAAK…AAKDASIGDD (197 aa)) is CPSase. L-glutamine contacts are provided by serine 51, glycine 249, and glycine 251. One can recognise a Glutamine amidotransferase type-1 domain in the interval 201–387 (HVVCMDFGMK…QEQLNEKCGV (187 aa)). Cysteine 276 (nucleophile) is an active-site residue. 5 residues coordinate L-glutamine: leucine 277, glutamine 280, asparagine 318, glycine 320, and phenylalanine 321. Catalysis depends on residues histidine 360 and glutamate 362.

The protein belongs to the CarA family. Composed of two chains; the small (or glutamine) chain promotes the hydrolysis of glutamine to ammonia, which is used by the large (or ammonia) chain to synthesize carbamoyl phosphate. Tetramer of heterodimers (alpha,beta)4.

The enzyme catalyses hydrogencarbonate + L-glutamine + 2 ATP + H2O = carbamoyl phosphate + L-glutamate + 2 ADP + phosphate + 2 H(+). The catalysed reaction is L-glutamine + H2O = L-glutamate + NH4(+). It functions in the pathway amino-acid biosynthesis; L-arginine biosynthesis; carbamoyl phosphate from bicarbonate: step 1/1. The protein operates within pyrimidine metabolism; UMP biosynthesis via de novo pathway; (S)-dihydroorotate from bicarbonate: step 1/3. Its function is as follows. Small subunit of the glutamine-dependent carbamoyl phosphate synthetase (CPSase). CPSase catalyzes the formation of carbamoyl phosphate from the ammonia moiety of glutamine, carbonate, and phosphate donated by ATP, constituting the first step of 2 biosynthetic pathways, one leading to arginine and/or urea and the other to pyrimidine nucleotides. The small subunit (glutamine amidotransferase) binds and cleaves glutamine to supply the large subunit with the substrate ammonia. The sequence is that of Carbamoyl phosphate synthase small chain from Rhodopirellula baltica (strain DSM 10527 / NCIMB 13988 / SH1).